The primary structure comprises 142 residues: Large ribosomal subunit protein uL11 (142 aa).

Belongs to the universal ribosomal protein uL11 family. Part of the ribosomal stalk of the 50S ribosomal subunit. Interacts with L10 and the large rRNA to form the base of the stalk. L10 forms an elongated spine to which L12 dimers bind in a sequential fashion forming a multimeric L10(L12)X complex. One or more lysine residues are methylated.

Forms part of the ribosomal stalk which helps the ribosome interact with GTP-bound translation factors. The polypeptide is Large ribosomal subunit protein uL11 (Dictyoglomus turgidum (strain DSM 6724 / Z-1310)).